The sequence spans 73 residues: Sec-independent protein translocase protein TatA (73 aa).

Residues M1 to G21 traverse the membrane as a helical segment. Positions K50–K73 are disordered. Positions K62–K73 are enriched in basic and acidic residues.

This sequence belongs to the TatA/E family. In terms of assembly, the Tat system comprises two distinct complexes: a TatABC complex, containing multiple copies of TatA, TatB and TatC subunits, and a separate TatA complex, containing only TatA subunits. Substrates initially bind to the TatABC complex, which probably triggers association of the separate TatA complex to form the active translocon.

It is found in the cell inner membrane. In terms of biological role, part of the twin-arginine translocation (Tat) system that transports large folded proteins containing a characteristic twin-arginine motif in their signal peptide across membranes. TatA could form the protein-conducting channel of the Tat system. The sequence is that of Sec-independent protein translocase protein TatA from Polynucleobacter necessarius subsp. necessarius (strain STIR1).